Reading from the N-terminus, the 200-residue chain is Holliday junction branch migration complex subunit RuvA (200 aa).

A domain I region spans residues 1–64 (MIGRIVGTLI…EDSHTLYGFI (64 aa)). Positions 65–143 (DKNERALFRV…QAAKTDLFSA (79 aa)) are domain II. A flexible linker region spans residues 144–149 (PAVLRQ). Residues 150-200 (VQADPRQEAEAALISLGYKPQEAAKAIAGVPVDAANSEDVIKAALKGMLRK) are domain III.

Belongs to the RuvA family. As to quaternary structure, homotetramer. Forms an RuvA(8)-RuvB(12)-Holliday junction (HJ) complex. HJ DNA is sandwiched between 2 RuvA tetramers; dsDNA enters through RuvA and exits via RuvB. An RuvB hexamer assembles on each DNA strand where it exits the tetramer. Each RuvB hexamer is contacted by two RuvA subunits (via domain III) on 2 adjacent RuvB subunits; this complex drives branch migration. In the full resolvosome a probable DNA-RuvA(4)-RuvB(12)-RuvC(2) complex forms which resolves the HJ.

The protein localises to the cytoplasm. Its function is as follows. The RuvA-RuvB-RuvC complex processes Holliday junction (HJ) DNA during genetic recombination and DNA repair, while the RuvA-RuvB complex plays an important role in the rescue of blocked DNA replication forks via replication fork reversal (RFR). RuvA specifically binds to HJ cruciform DNA, conferring on it an open structure. The RuvB hexamer acts as an ATP-dependent pump, pulling dsDNA into and through the RuvAB complex. HJ branch migration allows RuvC to scan DNA until it finds its consensus sequence, where it cleaves and resolves the cruciform DNA. The chain is Holliday junction branch migration complex subunit RuvA from Marinomonas sp. (strain MWYL1).